A 184-amino-acid polypeptide reads, in one-letter code: Large ribosomal subunit protein uL6 (184 aa).

This sequence belongs to the universal ribosomal protein uL6 family. Part of the 50S ribosomal subunit.

In terms of biological role, this protein binds to the 23S rRNA, and is important in its secondary structure. It is located near the subunit interface in the base of the L7/L12 stalk, and near the tRNA binding site of the peptidyltransferase center. The sequence is that of Large ribosomal subunit protein uL6 from Pyrococcus abyssi (strain GE5 / Orsay).